A 706-amino-acid chain; its full sequence is Choline transporter-like protein 2 (706 aa).

The Cytoplasmic portion of the chain corresponds to 1-33; sequence MGKDSQNYYGKHGTPQKYDPTFKGPIYNRGCTD. A Phosphothreonine modification is found at Thr-14. The chain crosses the membrane as a helical span at residues 34 to 54; sequence VICCVLLFLAIVGYVAVGIIA. Residues 55–232 are Extracellular-facing; sequence WTHGDPRKVI…QIFEDYTVSW (178 aa). N-linked (GlcNAc...) asparagine glycosylation is found at Asn-187 and Asn-200. A helical transmembrane segment spans residues 233 to 253; the sequence is YWIIIGLVIAMVLSLLFIVLL. The Cytoplasmic portion of the chain corresponds to 254-256; that stretch reads RFL. A helical membrane pass occupies residues 257–277; that stretch reads AGIMVWVMIVMVILVLGYGIF. Topologically, residues 278–315 are extracellular; the sequence is HCYMEYSRLRGEAGSDVSLVDLGFQTDLRVYLHLRQTW. Residues 316 to 336 form a helical membrane-spanning segment; it reads MAFMIILSILEVVIILLLIFL. Residues 337–364 lie on the Cytoplasmic side of the membrane; the sequence is RKRILIAIALIKEASRAVGHVMCSLLYP. The helical transmembrane segment at 365–385 threads the bilayer; the sequence is LVTFFLLCLCIAYWASTSVFL. The Extracellular segment spans residues 386-454; that stretch reads STSNTAVYKV…LQIFNAFMFF (69 aa). Residue Asn-417 is glycosylated (N-linked (GlcNAc...) asparagine). Residues 455–477 form a helical membrane-spanning segment; it reads WLANFVLALGQVTLAGAFASYYW. Residues 478–504 lie on the Cytoplasmic side of the membrane; the sequence is AMRKPDDMPAFPLFSAFGRALRYHTGS. A helical membrane pass occupies residues 505–525; it reads LAFGSLILAIVQIIRVMLEYL. At 526–563 the chain is on the extracellular side; it reads DQRLKAAQNKFAKFLMVCLKCCFWCLEKFIKFLNRNAY. Residues 564–584 form a helical membrane-spanning segment; it reads IMIAIYGTNFCTSARNAFFLL. Residues 585 to 599 lie on the Cytoplasmic side of the membrane; it reads MRNIIRVAVLDKVTD. A helical membrane pass occupies residues 600–620; the sequence is FLFLLGKLLIVGSVGILAFFF. Residues 621–638 lie on the Extracellular side of the membrane; the sequence is FTHRIRIVQDTAPPLNYY. A helical membrane pass occupies residues 639 to 659; that stretch reads WVPILTVIIGSYLIAHGFFSV. Residues 660 to 706 are Cytoplasmic-facing; the sequence is YGMCVDTLFLCFLEDLERNDGSAERPYFMSSTLKKLLNKTNKKVAES.

It belongs to the CTL (choline transporter-like) family. In terms of assembly, interacts with COCH. Post-translationally, glycosylated, glycosylation differs from tissue to tissue. The molecular mass of the mature glycosylated protein is highest in kidney, followed by lung, colon and spleen, then brain and tongue. Expressed at high levels in lung, colon, inner ear and spleen (at protein level). Progressively lower levels in brain, tongue, liver and kidney (at protein level). In the kidney, prominent expression in glomeruli in the lining of Bowman's capsule and on the mesangial cells adjacent to the vessels within the glomerulus (at protein level). Strongly expressed on the membranes of splenocytes and in lung parenchyme (at protein level). As to expression, expressed at higher levels than isoform 2 in colon, heart, kidney, lung, cochlea, tongue and muscle, as well as in the inner ear. In terms of tissue distribution, predominantly expressed in brain, liver and spleen.

It is found in the cell membrane. Its subcellular location is the mitochondrion outer membrane. It carries out the reaction choline(out) + n H(+)(in) = choline(in) + n H(+)(out). It catalyses the reaction ethanolamine(out) + n H(+)(in) = ethanolamine(in) + n H(+)(out). In terms of biological role, choline/H+ antiporter, mainly in mitochodria. Also acts as a low-affinity ethanolamine/H+ antiporter, regulating the supply of extracellular ethanolamine (Etn) for the CDP-Etn pathway, redistribute intracellular Etn and balance the CDP-Cho and CDP-Etn arms of the Kennedy pathway. The sequence is that of Choline transporter-like protein 2 (Slc44a2) from Mus musculus (Mouse).